The chain runs to 420 residues: Glycogen synthase kinase-3 beta (420 aa).

Residues 1–22 show a composition bias toward polar residues; it reads MSGRPRTTSFAESCKPVQQPSA. The interval 1-53 is disordered; it reads MSGRPRTTSFAESCKPVQQPSAFGSMKVSRDKDGSKVTTVVATPGQGPDRPQE. Ser-9 is subject to Phosphoserine; by PKB/AKT1, RPS6KA3 and SGK3. The S-palmitoyl cysteine moiety is linked to residue Cys-14. Positions 56–340 constitute a Protein kinase domain; that stretch reads YTDTKVIGNG…PLEACAHSFF (285 aa). ATP is bound by residues 62 to 70 and Lys-85; that span reads IGNGSFGVV. The active-site Proton acceptor is Asp-181. Tyr-216 bears the Phosphotyrosine mark. The disordered stretch occupies residues 385-420; sequence QAAASPPANATAASDTNAGDRGQTNNAASASASNST. 2 stretches are compositionally biased toward low complexity: residues 386-401 and 409-420; these read AAAS…SDTN and NNAASASASNST. At Ser-389 the chain carries Phosphoserine.

Belongs to the protein kinase superfamily. CMGC Ser/Thr protein kinase family. GSK-3 subfamily. In terms of assembly, monomer. Interacts with DAB2IP (via C2 domain); the interaction stimulates GSK3B kinase activation. Interacts (via C2 domain) with PPP2CA. Interacts with ARRB2, AXIN1, CABYR, DISC1, MMP2, MUC1, NIN, PRUNE1 and ZBED3. Interacts with AXIN1; the interaction mediates hyperphosphorylation of CTNNB1 leading to its ubiquitination and destruction. Interacts with and phosphorylates SNAI1. Interacts with DNM1L (via a C-terminal domain). Found in a complex composed of MACF1, APC, AXIN1, CTNNB1 and GSK3B. Interacts with SGK3. Interacts with the CLOCK-BMAL1 heterodimer. Interacts with the BMAL1. Interacts with CTNND2. The complex composed, at least, of APC, CTNNB1 and GSK3B interacts with JPT1; the interaction requires the inactive form of GSK3B (phosphorylated at 'Ser-9'). Forms a complex composed of PRKAR2A or PRKAR2B, GSK3B and GSKIP through GSKIP interaction; facilitates PKA-induced phosphorylation and regulates GSK3B activity. Interacts with GSKIP. Interacts with GID8. Interacts with PIWIL2. Interacts with LMBR1L. Interacts with DDX3X. Interacts with BIRC2. Interacts with TNFRSF10B; TNFRSF10B stimulation inhibits GSK3B kinase activity. Found in a complex with SLC39A6, SLC39A10 and with GSK3B that controls NCAM1 phosphorylation. Interacts with PKP3 (via ARM repeats); the interaction may be involved in PKP3 protein degradation. Post-translationally, phosphorylated by AKT1 and ILK1. Upon insulin-mediated signaling, the activated PKB/AKT1 and RPS6KA3 protein kinases phosphorylate and deactivate GSK3B, resulting in the dephosphorylation and activation of GYS1. Activated by phosphorylation at Tyr-216. Inactivated by phosphorylation at Ser-9. Phosphorylated in a circadian manner in the hippocampus. In terms of processing, mono-ADP-ribosylation by PARP10 negatively regulates kinase activity. Palmitoylated. Palmitoylation by ZDHHC4 prevents AKT1-mediated phosphorylation.

It localises to the cytoplasm. The protein resides in the nucleus. The protein localises to the membrane. It is found in the cell membrane. It catalyses the reaction L-seryl-[tau protein] + ATP = O-phospho-L-seryl-[tau protein] + ADP + H(+). The enzyme catalyses L-threonyl-[tau protein] + ATP = O-phospho-L-threonyl-[tau protein] + ADP + H(+). The catalysed reaction is L-seryl-[protein] + ATP = O-phospho-L-seryl-[protein] + ADP + H(+). It carries out the reaction L-threonyl-[protein] + ATP = O-phospho-L-threonyl-[protein] + ADP + H(+). Activated by phosphorylation at Tyr-216. In response to insulin, inhibited by phosphorylation at Ser-9 by PKB/AKT1; phosphorylation at this site causes a conformational change, preventing access of substrates to the active site. Inhibited by IL22 treatment which also triggers phosphorylation at Ser-9, promoting inactivation. Inhibited by lithium. In terms of biological role, constitutively active protein kinase that acts as a negative regulator in the hormonal control of glucose homeostasis, Wnt signaling and regulation of transcription factors and microtubules, by phosphorylating and inactivating glycogen synthase (GYS1 or GYS2), EIF2B, CTNNB1/beta-catenin, APC, AXIN1, DPYSL2/CRMP2, JUN, NFATC1/NFATC, MAPT/TAU and MACF1. Requires primed phosphorylation of the majority of its substrates. In skeletal muscle, contributes to insulin regulation of glycogen synthesis by phosphorylating and inhibiting GYS1 activity and hence glycogen synthesis. May also mediate the development of insulin resistance by regulating activation of transcription factors. Regulates protein synthesis by controlling the activity of initiation factor 2B (EIF2BE/EIF2B5) in the same manner as glycogen synthase. In Wnt signaling, GSK3B forms a multimeric complex with APC, AXIN1 and CTNNB1/beta-catenin and phosphorylates the N-terminus of CTNNB1 leading to its degradation mediated by ubiquitin/proteasomes. Phosphorylates JUN at sites proximal to its DNA-binding domain, thereby reducing its affinity for DNA. Phosphorylates NFATC1/NFATC on conserved serine residues promoting NFATC1/NFATC nuclear export, shutting off NFATC1/NFATC gene regulation, and thereby opposing the action of calcineurin. Phosphorylates MAPT/TAU on 'Thr-548', decreasing significantly MAPT/TAU ability to bind and stabilize microtubules. MAPT/TAU is the principal component of neurofibrillary tangles in Alzheimer disease. Plays an important role in ERBB2-dependent stabilization of microtubules at the cell cortex. Phosphorylates MACF1, inhibiting its binding to microtubules which is critical for its role in bulge stem cell migration and skin wound repair. Probably regulates NF-kappa-B (NFKB1) at the transcriptional level and is required for the NF-kappa-B-mediated anti-apoptotic response to TNF-alpha (TNF/TNFA). Negatively regulates replication in pancreatic beta-cells, resulting in apoptosis, loss of beta-cells and diabetes. Through phosphorylation of the anti-apoptotic protein MCL1, may control cell apoptosis in response to growth factors deprivation. Phosphorylates MUC1 in breast cancer cells, decreasing the interaction of MUC1 with CTNNB1/beta-catenin. Is necessary for the establishment of neuronal polarity and axon outgrowth. Phosphorylates MARK2, leading to inhibition of its activity. Phosphorylates SIK1 at 'Thr-182', leading to sustainment of its activity. Phosphorylates ZC3HAV1 which enhances its antiviral activity. Phosphorylates SNAI1, leading to its ubiquitination and proteasomal degradation. Phosphorylates SFPQ at 'Thr-687' upon T-cell activation. Phosphorylates NR1D1 st 'Ser-55' and 'Ser-59' and stabilizes it by protecting it from proteasomal degradation. Regulates the circadian clock via phosphorylation of the major clock components including BMAL1, CLOCK and PER2. Phosphorylates CLOCK AT 'Ser-427' and targets it for proteasomal degradation. Phosphorylates BMAL1 at 'Ser-17' and 'Ser-21' and primes it for ubiquitination and proteasomal degradation. Phosphorylates FBXL2 at 'Thr-404' and primes it for ubiquitination by the SCF(FBXO3) complex and proteasomal degradation. Phosphorylates OGT at 'Ser-3' or 'Ser-4' which positively regulates its activity. Phosphorylates MYCN in neuroblastoma cells which may promote its degradation. Regulates the circadian rhythmicity of hippocampal long-term potentiation and BMAL1 and PER2 expression. Acts as a regulator of autophagy by mediating phosphorylation of KAT5/TIP60 under starvation conditions, activating KAT5/TIP60 acetyltransferase activity and promoting acetylation of key autophagy regulators, such as ULK1 and RUBCNL/Pacer. Negatively regulates extrinsic apoptotic signaling pathway via death domain receptors. Promotes the formation of an anti-apoptotic complex, made of DDX3X, BRIC2 and GSK3B, at death receptors, including TNFRSF10B. The anti-apoptotic function is most effective with weak apoptotic signals and can be overcome by stronger stimulation. Phosphorylates E2F1, promoting the interaction between E2F1 and USP11, stabilizing E2F1 and promoting its activity. Phosphorylates mTORC2 complex component RICTOR at 'Ser-1235' in response to endoplasmic stress, inhibiting mTORC2. Phosphorylates FXR1, promoting FXR1 ubiquitination by the SCF(FBXO4) complex and FXR1 degradation by the proteasome. Phosphorylates interleukin-22 receptor subunit IL22RA1, preventing its proteasomal degradation. In Rattus norvegicus (Rat), this protein is Glycogen synthase kinase-3 beta.